Consider the following 91-residue polypeptide: Small ribosomal subunit protein uS19 (91 aa).

This sequence belongs to the universal ribosomal protein uS19 family.

Functionally, protein S19 forms a complex with S13 that binds strongly to the 16S ribosomal RNA. The polypeptide is Small ribosomal subunit protein uS19 (Opitutus terrae (strain DSM 11246 / JCM 15787 / PB90-1)).